A 365-amino-acid chain; its full sequence is Histidinol-phosphate aminotransferase (365 aa).

The residue at position 227 (Lys227) is an N6-(pyridoxal phosphate)lysine.

It belongs to the class-II pyridoxal-phosphate-dependent aminotransferase family. Histidinol-phosphate aminotransferase subfamily. In terms of assembly, homodimer. It depends on pyridoxal 5'-phosphate as a cofactor.

It catalyses the reaction L-histidinol phosphate + 2-oxoglutarate = 3-(imidazol-4-yl)-2-oxopropyl phosphate + L-glutamate. It participates in amino-acid biosynthesis; L-histidine biosynthesis; L-histidine from 5-phospho-alpha-D-ribose 1-diphosphate: step 7/9. This is Histidinol-phosphate aminotransferase from Polaromonas naphthalenivorans (strain CJ2).